Consider the following 615-residue polypeptide: 1-deoxy-D-xylulose-5-phosphate synthase (615 aa).

Thiamine diphosphate is bound by residues His-76 and 117–119; that span reads GHS. Asp-148 is a binding site for Mg(2+). Residues 149-150, Asn-177, Tyr-284, and Glu-365 each bind thiamine diphosphate; that span reads GA. Mg(2+) is bound at residue Asn-177.

It belongs to the transketolase family. DXPS subfamily. In terms of assembly, homodimer. The cofactor is Mg(2+). Requires thiamine diphosphate as cofactor.

The enzyme catalyses D-glyceraldehyde 3-phosphate + pyruvate + H(+) = 1-deoxy-D-xylulose 5-phosphate + CO2. The protein operates within metabolic intermediate biosynthesis; 1-deoxy-D-xylulose 5-phosphate biosynthesis; 1-deoxy-D-xylulose 5-phosphate from D-glyceraldehyde 3-phosphate and pyruvate: step 1/1. Catalyzes the acyloin condensation reaction between C atoms 2 and 3 of pyruvate and glyceraldehyde 3-phosphate to yield 1-deoxy-D-xylulose-5-phosphate (DXP). This Francisella tularensis subsp. mediasiatica (strain FSC147) protein is 1-deoxy-D-xylulose-5-phosphate synthase.